A 354-amino-acid polypeptide reads, in one-letter code: Uroporphyrinogen decarboxylase (354 aa).

Residues 35 to 39 (RQAGR), Asp-84, Tyr-159, Ser-214, and His-333 each bind substrate.

This sequence belongs to the uroporphyrinogen decarboxylase family. As to quaternary structure, homodimer.

The protein resides in the cytoplasm. The catalysed reaction is uroporphyrinogen III + 4 H(+) = coproporphyrinogen III + 4 CO2. Its pathway is porphyrin-containing compound metabolism; protoporphyrin-IX biosynthesis; coproporphyrinogen-III from 5-aminolevulinate: step 4/4. Functionally, catalyzes the decarboxylation of four acetate groups of uroporphyrinogen-III to yield coproporphyrinogen-III. In Nocardia farcinica (strain IFM 10152), this protein is Uroporphyrinogen decarboxylase.